The following is a 122-amino-acid chain: Large ribosomal subunit protein uL14 (122 aa).

This sequence belongs to the universal ribosomal protein uL14 family. Part of the 50S ribosomal subunit. Forms a cluster with proteins L3 and L19. In the 70S ribosome, L14 and L19 interact and together make contacts with the 16S rRNA in bridges B5 and B8.

In terms of biological role, binds to 23S rRNA. Forms part of two intersubunit bridges in the 70S ribosome. This is Large ribosomal subunit protein uL14 from Nautilia profundicola (strain ATCC BAA-1463 / DSM 18972 / AmH).